A 741-amino-acid chain; its full sequence is NAD(P)H-quinone oxidoreductase subunit 5, chloroplastic (741 aa).

A run of 16 helical transmembrane segments spans residues 9–29 (WIIPFLPLPVPMLIGLGLLLF), 40–60 (WAFQSVLLLSIVMIFSINLSI), 89–109 (IDPLTSIMSILITTVGILVLI), 125–145 (FAYMSFFSTSMLGLVTSSNLI), 147–167 (IYIFWELVGMCSYLLIGFWFT), 185–205 (GDFGLLLGILGFYWITGSFEF), 219–239 (NEVNFFFVTLCAVLLFGGAIA), 258–278 (TPISALIRAATMVAAGIFLVA), 283–303 (LFIVIPHIMNFISLIGIITVF), 327–347 (LGYMMLALGMGSYRSALFHLI), 354–374 (ALLFLGSGSVIHSMETLVGYC), 396–416 (NSFLLGTLSLCGIPPLACFWS), 425–445 (WLYSPIFATIAWSTAGLTAFY), 549–569 (LFPILILIIFTLFVGFLGIHF), 605–625 (VFSVSIASFGIFIAFFLYKPV), and 721–741 (YLFFYFSYVSIFLLIYYFVNL).

The protein belongs to the complex I subunit 5 family. As to quaternary structure, NDH is composed of at least 16 different subunits, 5 of which are encoded in the nucleus.

It localises to the plastid. The protein resides in the chloroplast thylakoid membrane. It carries out the reaction a plastoquinone + NADH + (n+1) H(+)(in) = a plastoquinol + NAD(+) + n H(+)(out). The catalysed reaction is a plastoquinone + NADPH + (n+1) H(+)(in) = a plastoquinol + NADP(+) + n H(+)(out). Functionally, NDH shuttles electrons from NAD(P)H:plastoquinone, via FMN and iron-sulfur (Fe-S) centers, to quinones in the photosynthetic chain and possibly in a chloroplast respiratory chain. The immediate electron acceptor for the enzyme in this species is believed to be plastoquinone. Couples the redox reaction to proton translocation, and thus conserves the redox energy in a proton gradient. This Pentatrichia integra (Rock-climbing daisy) protein is NAD(P)H-quinone oxidoreductase subunit 5, chloroplastic (ndhF).